Here is a 175-residue protein sequence, read N- to C-terminus: Ferritin light chain (175 aa).

Ser2 carries the post-translational modification N-acetylserine. Residues 7 to 156 (QNYSTEVEAA…DHLTNLRRLS (150 aa)) form the Ferritin-like diiron domain. Glu54, Glu57, Glu58, Glu61, and Glu64 together coordinate Fe cation.

It belongs to the ferritin family. As to quaternary structure, oligomer of 24 subunits. There are two types of subunits: L (light) chain and H (heavy) chain. The major chain can be light or heavy, depending on the species and tissue type. The functional molecule forms a roughly spherical shell with a diameter of 12 nm and contains a central cavity into which the insoluble mineral iron core is deposited. Interacts with NCOA4.

The protein resides in the cytoplasmic vesicle. Its subcellular location is the autophagosome. It is found in the cytoplasm. It localises to the autolysosome. Stores iron in a soluble, non-toxic, readily available form. Important for iron homeostasis. Iron is taken up in the ferrous form and deposited as ferric hydroxides after oxidation. Also plays a role in delivery of iron to cells. Mediates iron uptake in capsule cells of the developing kidney. Delivery to lysosomes by the cargo receptor NCOA4 for autophagic degradation and release or iron. The sequence is that of Ferritin light chain (FTL) from Felis catus (Cat).